The following is a 739-amino-acid chain: uncharacterized protein (739 aa).

The next 8 helical transmembrane spans lie at 53–73, 90–110, 114–134, 178–198, 421–441, 457–477, 491–511, and 532–552; these read LALG…ALTV, WHLF…AAIP, LMFI…GTFM, TYIL…QLGL, LIWI…VCIV, AFLR…LALM, GLAM…LPAV, and IVYF…SWMY.

This sequence belongs to the aromatic acid exporter ArAE (TC 2.A.85) family.

It is found in the cell membrane. This is an uncharacterized protein from Gluconobacter oxydans (strain 621H) (Gluconobacter suboxydans).